The chain runs to 381 residues: Chaperone protein DnaJ (381 aa).

The region spanning 5-70 (DFYEVLGVGR…QKKAAYDQYG (66 aa)) is the J domain. The segment at 136 to 214 (GCSKEIEVPT…CHGQGRKQKT (79 aa)) adopts a CR-type zinc-finger fold. Zn(2+)-binding residues include Cys-149, Cys-152, Cys-166, Cys-169, Cys-188, Cys-191, Cys-202, and Cys-205. CXXCXGXG motif repeat units follow at residues 149 to 156 (CDACDGSG), 166 to 173 (CGTCHGHG), 188 to 195 (CPTCHGKG), and 202 to 209 (CNVCHGQG).

This sequence belongs to the DnaJ family. Homodimer. Zn(2+) is required as a cofactor.

The protein resides in the cytoplasm. Its function is as follows. Participates actively in the response to hyperosmotic and heat shock by preventing the aggregation of stress-denatured proteins and by disaggregating proteins, also in an autonomous, DnaK-independent fashion. Unfolded proteins bind initially to DnaJ; upon interaction with the DnaJ-bound protein, DnaK hydrolyzes its bound ATP, resulting in the formation of a stable complex. GrpE releases ADP from DnaK; ATP binding to DnaK triggers the release of the substrate protein, thus completing the reaction cycle. Several rounds of ATP-dependent interactions between DnaJ, DnaK and GrpE are required for fully efficient folding. Also involved, together with DnaK and GrpE, in the DNA replication of plasmids through activation of initiation proteins. The chain is Chaperone protein DnaJ from Vibrio cholerae serotype O1 (strain ATCC 39541 / Classical Ogawa 395 / O395).